Consider the following 413-residue polypeptide: Phosphoglycerate kinase (413 aa).

Substrate-binding positions include 24–26 (DFN), R39, 62–65 (HLSR), R123, and R165. Residues K216, E343, and 369–372 (GGDS) contribute to the ATP site.

Belongs to the phosphoglycerate kinase family. As to quaternary structure, monomer.

The protein localises to the cytoplasm. The enzyme catalyses (2R)-3-phosphoglycerate + ATP = (2R)-3-phospho-glyceroyl phosphate + ADP. It functions in the pathway carbohydrate degradation; glycolysis; pyruvate from D-glyceraldehyde 3-phosphate: step 2/5. The polypeptide is Phosphoglycerate kinase (Mycoplasmoides gallisepticum (strain R(low / passage 15 / clone 2)) (Mycoplasma gallisepticum)).